Reading from the N-terminus, the 898-residue chain is MDESNDKENEFGDSFLEDSGDITRTTEDEDEAPLEPRFKYERLEGESTLPFMKTATFTSIDLHDKFIAIGTASGLIYILDHHGYGNFDSVPPLKPHRCAVSKLKFDETGSYILSCANDSKLVVSGIGNDKLCCTVNIQVMPKSICFSPDFIRQQSGHCFIMGERNLVLYEKRLFQYKASNLYSGSERDGFIHCCSWNDNLIAFTNDTGTRVYERGTEKILTSVQPTHDVDRVRSSRCPPKHMWMSENTLVIGWADTVTVLKIKGNEGMRKGEIHHIFHVSMFISGISYLPKNGSDYELFLVGLQMEGEDFDDCASVMSTMTTLTAMESSATATLKTCVIRPLGLKDYELQSEDEIVNIRLSTHTLPYMIHGLGIPYLSTYFILTTKQIIMAVPYGPEDGIKWRLQYKLYTEAFEMAKEHADMLAKTDVSPKKVGRKIIEGYLESKKARVAASWLSSICGDCKEEWEWAVDRFHDAKMSTLLGDVLPDSKPRLDPSAYEKVLLASLFNNVKLFRRLVQTWSPDLYMTSTIIDQTQWRIQQISKSEDIEDVEEVEKILMDALAHLYLYERKYESALKILMICQDFQIFNVIDKHQLFDLVKDQISDLMNINSERALRLLLDNADSVEPSFVMAKINGQPKLQLAYLTKLMSRNEGIEFADKAVQLYADHEKKKLLPFLKKNVNYNVTKARKLCSDRGFVEETIFLLAKSGNHYEAVKMMVREYKNIEKVIAYCKDQNDRDLWIHLLEVVADFPTHFSQLIIEASNCLDPILIMDKLPDDVDIPNLSEALEKLLTDFTNYVELQQCCYDSTLNDLHVLTNNLMLASDKSVSVSLMTRCSLCSQVIMNTGQDMIPRKFNDIKVFKCGHIFHLTCSASEIDRRQMIEDGICIACSDNSDHVNV.

Positions 1-10 (MDESNDKENE) are enriched in basic and acidic residues. The interval 1-35 (MDESNDKENEFGDSFLEDSGDITRTTEDEDEAPLE) is disordered. The stretch at 614-756 (LRLLLDNADS…VADFPTHFSQ (143 aa)) is one CHCR repeat. The segment at 835–890 (CSLCSQVIMNTGQDMIPRKFNDIKVFKCGHIFHLTCSASEIDRRQMIEDGICIACS) adopts an RING-type; atypical zinc-finger fold.

The protein belongs to the VPS41 family. Probable component of the homotypic fusion and vacuole protein sorting (HOPS) complex consisting of the core class C Vps proteins vps-11, vps-16, vps-18, and which further associates with vps-33.1, vps-39 and vps-41.

It localises to the endosome membrane. It is found in the late endosome. The protein resides in the lysosome. The protein localises to the golgi apparatus. Its subcellular location is the trans-Golgi network. It localises to the early endosome. It is found in the cytoplasmic vesicle. The protein resides in the clathrin-coated vesicle. Its function is as follows. Plays a role in vesicle-mediated protein trafficking to lysosomal compartments including the endocytic membrane transport pathways. Believed to act in part as a core component of the putative HOPS endosomal tethering complex which is proposed to be involved in the rab-5-to-rab-7 endosome conversion probably implicating sand-1, and via binding SNAREs and SNARE complexes to mediate tethering and docking events during SNARE-mediated membrane fusion. The HOPS complex is proposed to be recruited to rab-7 on the late endosomal membrane and to regulate late endocytic, phagocytic and autophagic traffic towards lysosomes. Within the HOPS complex, contributes to the normal development of gut granules in the adult intestine. May mediate the tethering of autophagosomes with lysosomes. Has a role in the negative regulation of apoptosis. Required for uptake of exogenous dsRNA which is used in experimental RNA silencing. In Caenorhabditis briggsae, this protein is Vacuolar protein sorting-associated protein 41 homolog.